A 562-amino-acid chain; its full sequence is uncharacterized protein (562 aa).

This is an uncharacterized protein from Escherichia coli (strain K12).